The following is an 805-amino-acid chain: Angiotensin-converting enzyme 2 (805 aa).

A signal peptide spans 1–17 (MSSSSWLLLSLVAVTTA). The Extracellular segment spans residues 18 to 740 (QSLTEENAKT…LEPPYQPPVT (723 aa)). The Peptidase M2 domain occupies 19 to 607 (SLTEENAKTF…QNRNSFVGWN (589 aa)). The N-linked (GlcNAc...) asparagine glycan is linked to N53. A disulfide bridge connects residues C133 and C141. R169 is a binding site for chloride. Substrate-binding positions include R273 and 345-346 (HP). An intrachain disulfide couples C344 to C361. Zn(2+) is bound at residue H374. The active-site Proton acceptor is E375. Residues H378 and E402 each contribute to the Zn(2+) site. Chloride is bound by residues W477 and K481. H505 serves as the catalytic Proton donor. Substrate is bound at residue Y515. Residues C530 and C542 are joined by a disulfide bond. Residues N536 and N546 are each glycosylated (N-linked (GlcNAc...) asparagine). In terms of domain architecture, Collectrin-like spans 614-805 (ADQSIKVRIS…QNSDDAQTSF (192 aa)). The essential for cleavage by ADAM17 stretch occupies residues 652-659 (RKYFSIIK). N-linked (GlcNAc...) asparagine glycosylation is found at N660 and N690. The tract at residues 697-716 (RSEVEDAIRMSRGRINDVFG) is essential for cleavage by TMPRSS11D and TMPRSS2. Residues 741 to 761 (IWLIIFGVVMALVVVGIIILI) form a helical membrane-spanning segment. Over 762-805 (VTGIKGRKKKNETKREENPYDSMDIGKGESNAGFQNSDDAQTSF) the chain is Cytoplasmic. Positions 771 to 805 (KNETKREENPYDSMDIGKGESNAGFQNSDDAQTSF) are disordered. An LIR motif is present at residues 778–786 (ENPYDSMDI). Phosphotyrosine is present on Y781. Positions 781 to 784 (YDSM) match the Endocytic sorting signal motif. An SH2-binding motif is present at residues 781 to 785 (YDSMD). S783 is subject to Phosphoserine. K788 is covalently cross-linked (Glycyl lysine isopeptide (Lys-Gly) (interchain with G-Cter in ubiquitin)). A PTB motif is present at residues 792-795 (NAGF). Over residues 793–805 (AGFQNSDDAQTSF) the composition is skewed to polar residues. Positions 803-805 (TSF) match the PDZ-binding motif.

It belongs to the peptidase M2 family. Homodimer. Interacts with the catalytically active form of TMPRSS2. Interacts with SLC6A19; this interaction is essential for expression and function of SLC6A19 in intestine. Interacts with ITGA5:ITGB1. Probably interacts (via endocytic sorting signal motif) with AP2M1; the interaction is inhibited by phosphorylation of Tyr-781. Interacts (via PDZ-binding motif) with NHERF1 (via PDZ domains); the interaction may enhance ACE2 membrane residence. In terms of assembly, (Microbial infection) Weakly interacts with SARS-CoV S protein. It depends on Zn(2+) as a cofactor. The cofactor is chloride. Post-translationally, proteolytic cleavage by ADAM17 generates a secreted form. Also cleaved by serine proteases: TMPRSS2, TMPRSS11D and HPN/TMPRSS1. In terms of processing, phosphorylated. Phosphorylation at Tyr-781 probably inhibits interaction with AP2M1 and enables interactions with proteins containing SH2 domains. Ubiquitinated. Ubiquitinated on Lys-788 via 'Lys-48'-linked ubiquitin. 'Lys-48'-linked deubiquitinated by USP50 on the Lys-788; leading to its stabilization. As to expression, expressed in heart, kidney and forebrain (at protein level). Expressed in the small intestine, with expression in the intestinal brush border (at protein level). Ubiquitously expressed, with highest levels in ileum, kidney and lung. In lung, expressed on vascular endothelial and airway epithelial cells. Also expressed at high levels in lung secretory club and goblet cells as well as in alveolar type 2 cells.

It localises to the secreted. The protein localises to the cell membrane. The protein resides in the cytoplasm. It is found in the cell projection. Its subcellular location is the cilium. It localises to the apical cell membrane. It catalyses the reaction angiotensin II + H2O = angiotensin-(1-7) + L-phenylalanine. The catalysed reaction is angiotensin I + H2O = angiotensin-(1-9) + L-leucine. It carries out the reaction bradykinin(1-8) + H2O = bradykinin(1-7) + L-phenylalanine. The enzyme catalyses neurotensin + H2O = neurotensin-(1-12) + L-leucine. It catalyses the reaction kinetensin + H2O = kinetensin-(1-8) + L-leucine. The catalysed reaction is dynorphin A-(1-13) + H2O = dynorphin A-(1-12) + L-lysine. It carries out the reaction apelin-13 + H2O = apelin-12 + L-phenylalanine. The enzyme catalyses [Pyr1]apelin-13 + H2O = [Pyr1]apelin-12 + L-phenylalanine. It catalyses the reaction apelin-17 + H2O = apelin-16 + L-phenylalanine. Functionally, essential counter-regulatory carboxypeptidase of the renin-angiotensin hormone system that is a critical regulator of blood volume, systemic vascular resistance, and thus cardiovascular homeostasis. Converts angiotensin I to angiotensin 1-9, a nine-amino acid peptide with anti-hypertrophic effects in cardiomyocytes, and angiotensin II to angiotensin 1-7, which then acts as a beneficial vasodilator and anti-proliferation agent, counterbalancing the actions of the vasoconstrictor angiotensin II. Also removes the C-terminal residue from three other vasoactive peptides, neurotensin, kinetensin, and des-Arg bradykinin, but is not active on bradykinin. Also cleaves other biological peptides, such as apelins, casomorphins and dynorphin A. By cleavage of angiotensin II, may be an important regulator of heart function. By cleavage of angiotensin II, may also have a protective role in acute lung injury. Plays an important role in amino acid transport by acting as binding partner of amino acid transporter SLC6A19, regulating its trafficking on the cell surface and its activity. The sequence is that of Angiotensin-converting enzyme 2 (Ace2) from Mus musculus (Mouse).